The sequence spans 152 residues: Globin-1 subunit beta (152 aa).

Residue Ser-2 is modified to N-acetylserine. In terms of domain architecture, Globin spans 12-152; sequence VSNADQKDLL…SLVAVVQAAL (141 aa). 2 residues coordinate heme b: His-72 and His-104.

This sequence belongs to the globin family. Heterotetramer of two alpha chains and two beta chains.

The sequence is that of Globin-1 subunit beta from Anadara trapezia (Sydney cockle).